The chain runs to 498 residues: ATP synthase subunit beta, chloroplastic (498 aa).

ATP is bound at residue Gly-172–Thr-179.

The protein belongs to the ATPase alpha/beta chains family. As to quaternary structure, F-type ATPases have 2 components, CF(1) - the catalytic core - and CF(0) - the membrane proton channel. CF(1) has five subunits: alpha(3), beta(3), gamma(1), delta(1), epsilon(1). CF(0) has four main subunits: a(1), b(1), b'(1) and c(9-12).

It is found in the plastid. The protein localises to the chloroplast thylakoid membrane. The enzyme catalyses ATP + H2O + 4 H(+)(in) = ADP + phosphate + 5 H(+)(out). Its function is as follows. Produces ATP from ADP in the presence of a proton gradient across the membrane. The catalytic sites are hosted primarily by the beta subunits. The polypeptide is ATP synthase subunit beta, chloroplastic (Galbulimima belgraveana (Northern pigeonberry ash)).